A 453-amino-acid polypeptide reads, in one-letter code: Serine protease HTRA3 (453 aa).

A signal peptide spans Met1–Ala17. Positions Pro21 to Arg84 constitute an IGFBP N-terminal domain. Intrachain disulfides connect Cys25–Cys48, Cys29–Cys50, Cys34–Cys51, Cys39–Cys54, Cys62–Cys76, Cys70–Cys81, Cys83–Cys101, and Cys90–Cys126. One can recognise a Kazal-like domain in the interval Gly64–Leu128. Residues Gly175 to Phe340 form a serine protease region. Catalysis depends on charge relay system residues His191, Asp227, and Ser305. Positions Ile359 to Leu444 constitute a PDZ domain.

Belongs to the peptidase S1C family. Homotrimer. Interacts with TGFB1; the interaction inhibits TGFB-mediated signaling. Interacts with BMP4; the interaction inhibits BMP4-mediated signaling. Interacts with TGFB2 and GDF5. Interacts with MYH9. Widely expressed, with highest levels in both adult and fetal heart, ovary, uterus placenta, and bladder. In the endometrium, expressed in epithelial glands and the stroma. Also present in leukocytes. Isoform 1 is predominant in heart and skeletal muscle, whereas isoform 2 is predominant in placenta and kidney.

It localises to the secreted. Serine protease that cleaves beta-casein/CSN2 as well as several extracellular matrix (ECM) proteoglycans such as decorin/DCN, biglycan/BGN and fibronectin/FN1. Inhibits signaling mediated by TGF-beta family proteins possibly indirectly by degradation of these ECM proteoglycans. May act as a tumor suppressor. Negatively regulates, in vitro, trophoblast invasion during placental development and may be involved in the development of the placenta in vivo. May also have a role in ovarian development, granulosa cell differentiation and luteinization. This chain is Serine protease HTRA3 (HTRA3), found in Homo sapiens (Human).